A 377-amino-acid chain; its full sequence is Nitric oxide reductase FlRd-NAD(+) reductase (377 aa).

This sequence belongs to the FAD-dependent oxidoreductase family. FAD serves as cofactor.

It localises to the cytoplasm. The catalysed reaction is 2 reduced [nitric oxide reductase rubredoxin domain] + NAD(+) + H(+) = 2 oxidized [nitric oxide reductase rubredoxin domain] + NADH. Its pathway is nitrogen metabolism; nitric oxide reduction. Its function is as follows. One of at least two accessory proteins for anaerobic nitric oxide (NO) reductase. Reduces the rubredoxin moiety of NO reductase. The sequence is that of Nitric oxide reductase FlRd-NAD(+) reductase from Escherichia coli O157:H7.